A 270-amino-acid chain; its full sequence is Formamidopyrimidine-DNA glycosylase (270 aa).

P2 (schiff-base intermediate with DNA) is an active-site residue. Residue E3 is the Proton donor of the active site. K58 functions as the Proton donor; for beta-elimination activity in the catalytic mechanism. Residues H91, R110, and R151 each contribute to the DNA site. The FPG-type zinc finger occupies 236 to 270 (FVYGRGGEFCKVCGSTLREIRLGQRASVYCPRCQR). R260 (proton donor; for delta-elimination activity) is an active-site residue.

This sequence belongs to the FPG family. In terms of assembly, monomer. The cofactor is Zn(2+).

The catalysed reaction is Hydrolysis of DNA containing ring-opened 7-methylguanine residues, releasing 2,6-diamino-4-hydroxy-5-(N-methyl)formamidopyrimidine.. It catalyses the reaction 2'-deoxyribonucleotide-(2'-deoxyribose 5'-phosphate)-2'-deoxyribonucleotide-DNA = a 3'-end 2'-deoxyribonucleotide-(2,3-dehydro-2,3-deoxyribose 5'-phosphate)-DNA + a 5'-end 5'-phospho-2'-deoxyribonucleoside-DNA + H(+). In terms of biological role, involved in base excision repair of DNA damaged by oxidation or by mutagenic agents. Acts as a DNA glycosylase that recognizes and removes damaged bases. Has a preference for oxidized purines, such as 7,8-dihydro-8-oxoguanine (8-oxoG). Has AP (apurinic/apyrimidinic) lyase activity and introduces nicks in the DNA strand. Cleaves the DNA backbone by beta-delta elimination to generate a single-strand break at the site of the removed base with both 3'- and 5'-phosphates. This is Formamidopyrimidine-DNA glycosylase from Pseudomonas paraeruginosa (strain DSM 24068 / PA7) (Pseudomonas aeruginosa (strain PA7)).